Here is a 124-residue protein sequence, read N- to C-terminus: Small ribosomal subunit protein uS12 (124 aa).

Aspartate 89 carries the 3-methylthioaspartic acid modification.

The protein belongs to the universal ribosomal protein uS12 family. Part of the 30S ribosomal subunit. Contacts proteins S8 and S17. May interact with IF1 in the 30S initiation complex.

Its function is as follows. With S4 and S5 plays an important role in translational accuracy. In terms of biological role, interacts with and stabilizes bases of the 16S rRNA that are involved in tRNA selection in the A site and with the mRNA backbone. Located at the interface of the 30S and 50S subunits, it traverses the body of the 30S subunit contacting proteins on the other side and probably holding the rRNA structure together. The combined cluster of proteins S8, S12 and S17 appears to hold together the shoulder and platform of the 30S subunit. The chain is Small ribosomal subunit protein uS12 from Aliivibrio salmonicida (strain LFI1238) (Vibrio salmonicida (strain LFI1238)).